The chain runs to 398 residues: Acetate kinase (398 aa).

Residue N7 coordinates Mg(2+). Position 14 (K14) interacts with ATP. R91 is a binding site for substrate. The active-site Proton donor/acceptor is the D148. ATP contacts are provided by residues 208–212, 283–285, and 331–335; these read HIGNG, DMR, and GVGEN. E384 contacts Mg(2+).

The protein belongs to the acetokinase family. Homodimer. Mg(2+) serves as cofactor. Mn(2+) is required as a cofactor.

Its subcellular location is the cytoplasm. The enzyme catalyses acetate + ATP = acetyl phosphate + ADP. It participates in metabolic intermediate biosynthesis; acetyl-CoA biosynthesis; acetyl-CoA from acetate: step 1/2. In terms of biological role, catalyzes the formation of acetyl phosphate from acetate and ATP. Can also catalyze the reverse reaction. The protein is Acetate kinase of Phocaeicola vulgatus (strain ATCC 8482 / DSM 1447 / JCM 5826 / CCUG 4940 / NBRC 14291 / NCTC 11154) (Bacteroides vulgatus).